The sequence spans 1538 residues: Ferredoxin-dependent glutamate synthase (1538 aa).

Residue Cys-34 is the For GATase activity of the active site. One can recognise a Glutamine amidotransferase type-2 domain in the interval 34 to 431; sequence CGVGFIADVN…PGQMISVDIF (398 aa). An FMN-binding site is contributed by 1109 to 1166; that stretch reads LSEVHQLLAENQLRDRVTLRVDGGLRTGSDIVLAAIMGAEEFGFGTVAMIATGCIMAR. Residues Cys-1162, Cys-1168, and Cys-1173 each coordinate [3Fe-4S] cluster.

This sequence belongs to the glutamate synthase family. Monomer. Requires [3Fe-4S] cluster as cofactor. The cofactor is FAD. FMN is required as a cofactor.

It localises to the plastid. The protein localises to the chloroplast stroma. The enzyme catalyses 2 oxidized [2Fe-2S]-[ferredoxin] + 2 L-glutamate = L-glutamine + 2 reduced [2Fe-2S]-[ferredoxin] + 2-oxoglutarate + 2 H(+). The protein operates within amino-acid biosynthesis; L-glutamate biosynthesis via GLT pathway; L-glutamate from 2-oxoglutarate and L-glutamine (ferredoxin route): step 1/1. It participates in energy metabolism; nitrogen metabolism. The chain is Ferredoxin-dependent glutamate synthase (gltB) from Pyropia yezoensis (Susabi-nori).